An 88-amino-acid polypeptide reads, in one-letter code: Small ribosomal subunit protein uS17 (88 aa).

It belongs to the universal ribosomal protein uS17 family. Part of the 30S ribosomal subunit.

In terms of biological role, one of the primary rRNA binding proteins, it binds specifically to the 5'-end of 16S ribosomal RNA. This is Small ribosomal subunit protein uS17 from Mycoplasmopsis agalactiae (strain NCTC 10123 / CIP 59.7 / PG2) (Mycoplasma agalactiae).